We begin with the raw amino-acid sequence, 375 residues long: PqqA peptide cyclase (375 aa).

The region spanning 18–235 (ILPPMAMLAE…EAREKYQGIL (218 aa)) is the Radical SAM core domain. The [4Fe-4S] cluster site is built by cysteine 32, cysteine 36, and cysteine 39.

It belongs to the radical SAM superfamily. PqqE family. In terms of assembly, interacts with PqqD. The interaction is necessary for activity of PqqE. It depends on [4Fe-4S] cluster as a cofactor.

The catalysed reaction is [PQQ precursor protein] + S-adenosyl-L-methionine = E-Y cross-linked-[PQQ precursor protein] + 5'-deoxyadenosine + L-methionine + H(+). Its pathway is cofactor biosynthesis; pyrroloquinoline quinone biosynthesis. Catalyzes the cross-linking of a glutamate residue and a tyrosine residue in the PqqA protein as part of the biosynthesis of pyrroloquinoline quinone (PQQ). This Rhizobium meliloti (strain 1021) (Ensifer meliloti) protein is PqqA peptide cyclase.